Reading from the N-terminus, the 437-residue chain is ATP-dependent RNA helicase RhlB (437 aa).

The Q motif signature appears at 9–37 (KKFADFPLHKEVQQALNEVGFEFCTPIQA). Residues 40-219 (LPILLAKKDI…YDHMNEPEKV (180 aa)) enclose the Helicase ATP-binding domain. 53–60 (AQTGTGKT) lines the ATP pocket. Positions 165 to 168 (DEAD) match the DEAD box motif. The region spanning 243-390 (KMPLLLSLLE…VTSYDSEALL (148 aa)) is the Helicase C-terminal domain. The tract at residues 394 to 437 (PAPKRIHRKPSSHSRNSRDRSGSRPQGGHRGNAPRRHDKTRRHS) is disordered. A compositionally biased stretch (basic residues) spans 425-437 (NAPRRHDKTRRHS).

This sequence belongs to the DEAD box helicase family. RhlB subfamily. Component of the RNA degradosome, which is a multiprotein complex involved in RNA processing and mRNA degradation.

It localises to the cytoplasm. It catalyses the reaction ATP + H2O = ADP + phosphate + H(+). Functionally, DEAD-box RNA helicase involved in RNA degradation. Has RNA-dependent ATPase activity and unwinds double-stranded RNA. This Shewanella piezotolerans (strain WP3 / JCM 13877) protein is ATP-dependent RNA helicase RhlB.